The following is a 222-amino-acid chain: Glutathione transferase GST 23 (222 aa).

Residues Lys-4–Tyr-83 form the GST N-terminal domain. Glutathione is bound by residues Ser-14, Lys-41, Val-55, and Glu-67–Ser-68. A GST C-terminal domain is found at Asp-89–Leu-220.

This sequence belongs to the GST superfamily.

The enzyme catalyses RX + glutathione = an S-substituted glutathione + a halide anion + H(+). Functionally, involved in multiple disease resistance (MDR). The chain is Glutathione transferase GST 23 from Zea mays (Maize).